Here is a 319-residue protein sequence, read N- to C-terminus: RWD domain-containing protein 2B (319 aa).

The region spanning 41 to 165 (AELDLLASMF…EWVREHASGY (125 aa)) is the RWD domain. The residue at position 275 (Ser275) is a Phosphoserine.

As to expression, ubiquitous.

This chain is RWD domain-containing protein 2B (RWDD2B), found in Homo sapiens (Human).